Here is a 406-residue protein sequence, read N- to C-terminus: CMP-sialic acid transporter 2 (406 aa).

At 1–41 (MKNGMAECSVCRSRLVSPSSKAISRAYDNYNYKIRVSSKQR) the chain is on the cytoplasmic side. The helical transmembrane segment at 42–62 (ALNVFLVVGDCMLVGLQPVLV) threads the bilayer. The Lumenal segment spans residues 63–75 (YMSKVDGKFNFSP). A helical membrane pass occupies residues 76–96 (ISVNFLTEIAKVIFAMVMLLF). Topologically, residues 97–148 (QARHQKVGEKPLLSLSTFVQAARNNMLLAVPAGLYAINNYLKFTMQLYFNPA) are cytoplasmic. Residues 149-169 (TVKMLSNLKVLVIAVLLKMIM) form a helical membrane-spanning segment. Over 170–172 (KRR) the chain is Lumenal. The chain crosses the membrane as a helical span at residues 173-193 (FSIIQWEALALLLIGISINQL). Residues 194-201 (RSLPEGAT) are Cytoplasmic-facing. A helical transmembrane segment spans residues 202–222 (TVAVPIATGAYICTFIFVTVP). At 223 to 245 (SLASVYNEYALKSQYDTSIYLQN) the chain is on the lumenal side. The chain crosses the membrane as a helical span at residues 246–266 (LFLYGYGAIFNFLGILGTVIY). The Cytoplasmic portion of the chain corresponds to 267 to 282 (KGPGSFDILQGHSRAT). A helical membrane pass occupies residues 283–303 (MFLILNNAAQGILSSFFFKYA). Residues 304–323 (DTILKKYSSTVATIFTGIAS) are Lumenal-facing. A helical transmembrane segment spans residues 324–344 (AALFGHILTMNFLLGISIVFI). At 345 to 406 (SMHQFFSPLS…SDDRVPLLPR (62 aa)) the chain is on the cytoplasmic side.

It belongs to the nucleotide-sugar transporter family. CMP-Sialate:CMP antiporter (TC 2.A.7.12) subfamily.

It localises to the golgi apparatus membrane. Functionally, sugar transporter involved in the transport of CMP-sialic acid from the cytoplasm into the Golgi. The polypeptide is CMP-sialic acid transporter 2 (Arabidopsis thaliana (Mouse-ear cress)).